A 483-amino-acid polypeptide reads, in one-letter code: V-type proton ATPase subunit H (483 aa).

Residues S59 and S483 each carry the phosphoserine modification.

The protein belongs to the V-ATPase H subunit family. V-ATPase is a heteromultimeric enzyme made up of two complexes: the ATP-hydrolytic V1 complex and the proton translocation V0 complex. The V1 complex consists of three catalytic AB heterodimers that form a heterohexamer, three peripheral stalks each consisting of EG heterodimers, one central rotor including subunits D and F, and the regulatory subunits C and H. The proton translocation complex V0 consists of the proton transport subunit a, a ring of proteolipid subunits c9c'', rotary subunit d, subunits e and f, and the accessory subunits ATP6AP1/Ac45 and ATP6AP2/PRR. Interacts with AP2M1.

Its subcellular location is the cytoplasmic vesicle. It localises to the clathrin-coated vesicle membrane. Subunit of the V1 complex of vacuolar(H+)-ATPase (V-ATPase), a multisubunit enzyme composed of a peripheral complex (V1) that hydrolyzes ATP and a membrane integral complex (V0) that translocates protons. V-ATPase is responsible for acidifying and maintaining the pH of intracellular compartments and in some cell types, is targeted to the plasma membrane, where it is responsible for acidifying the extracellular environment. Subunit H is essential for V-ATPase activity, but not for the assembly of the complex. Involved in the endocytosis mediated by clathrin-coated pits, required for the formation of endosomes. The chain is V-type proton ATPase subunit H (Atp6v1h) from Mus musculus (Mouse).